A 372-amino-acid chain; its full sequence is MPYLGLLNKDEVLPPQVPAGTTVECPACGEGMSVVRSYNRGSTFVSRHFSHKGGGKGGGSGAGSNDGGCSGESEMHHKMKAIAYARLENDYPEATIELESNLEGRIPDVLLEFPEPCSPYGKGIAVEAQYQNKGKDKAAVVEHYLDREYSVAWLEEDAFSTHDVDLSGILSVWPYALPDRYETEGYPDVTRWLWQEKNPTVEMEIPIPADYWMSFDKSGEWVTIAEKSIKRRGSARISRTPDGHLTFSLGKAKGWGESESLSVQVVPNDVLKLRSFADDLERKAFGEDRPSPEECDPEWHELSKRWFKGSPTVTAWITAALPDPDGDSDVVVTLWKKQKETERVAMRVESYAAENLRDLADLLDRAFEIEKS.

The interval 49-72 (FSHKGGGKGGGSGAGSNDGGCSGE) is disordered. A compositionally biased stretch (gly residues) spans 55-70 (GKGGGSGAGSNDGGCS).

This is an uncharacterized protein from Halorubrum lacusprofundi (strain ATCC 49239 / DSM 5036 / JCM 8891 / ACAM 34).